A 159-amino-acid chain; its full sequence is Pathogenesis-related leaf protein 6 (159 aa).

The N-terminal stretch at 1-24 (MGLFNISLLLTCLMVLAIFHSCEA) is a signal peptide. Glutamine 25 bears the Pyrrolidone carboxylic acid mark. Residues 32–147 (LAVHNDARAQ…NGWWFISCNY (116 aa)) form the SCP domain. 3 disulfide bridges follow: cysteine 68-cysteine 136, cysteine 109-cysteine 115, and cysteine 131-cysteine 145.

This sequence belongs to the CRISP family.

Probably involved in the defense reaction of plants against pathogens. Has antifungal activity. This chain is Pathogenesis-related leaf protein 6 (PR1B1), found in Solanum lycopersicum (Tomato).